A 115-amino-acid polypeptide reads, in one-letter code: ESX-1 secretion-associated protein EspL (115 aa).

In Mycobacterium tuberculosis (strain CDC 1551 / Oshkosh), this protein is ESX-1 secretion-associated protein EspL.